The following is a 122-amino-acid chain: Large ribosomal subunit protein bL12 (122 aa).

This sequence belongs to the bacterial ribosomal protein bL12 family. Homodimer. Part of the ribosomal stalk of the 50S ribosomal subunit. Forms a multimeric L10(L12)X complex, where L10 forms an elongated spine to which 2 to 4 L12 dimers bind in a sequential fashion. Binds GTP-bound translation factors.

Its function is as follows. Forms part of the ribosomal stalk which helps the ribosome interact with GTP-bound translation factors. Is thus essential for accurate translation. In Streptococcus pneumoniae serotype 19F (strain G54), this protein is Large ribosomal subunit protein bL12.